Reading from the N-terminus, the 324-residue chain is MKKIGLLTSGGDCPGLNACIRAVVRTANYYNIEVVAFKRGFKGLIENDFTTLDYKSVAGILQKGGTILLTAREPRFKDYNFRKIAYENIQKHNIEALFVIGGNGSFQGAYLLQKDFGLNIIGIPKTIDNDIYGTDYAIGFDTAVNNAMEAIDKIKDTTMSHERIFIVEVMGRDNGFIALEVGIAVGAELTLIPEYPFPLHVIEETILKAKEMGKNFAIIVLAEGVASAKELSEILNERLKDKDVGEIRYQVLGYIQRGGSPSAYDRVMASKFGVFAVEKFVQGEKNFMVAYENGKLLTKPLEISFNKVRIPNLEEYQINNILSM.

Residue G11 coordinates ATP. 21-25 (RAVVR) is an ADP binding site. ATP is bound by residues 72-73 (RE) and 102-105 (GNGS). N103 provides a ligand contact to Mg(2+). 126–128 (TID) contributes to the substrate binding site. The active-site Proton acceptor is D128. K155 is a binding site for ADP. Residues R163 and 170–172 (MGR) contribute to the substrate site. Residues 186–188 (GAE) and 214–216 (KNF) contribute to the ADP site. Substrate-binding positions include E223, R248, and 254-257 (YIQR).

It belongs to the phosphofructokinase type A (PFKA) family. ATP-dependent PFK group I subfamily. Prokaryotic clade 'B1' sub-subfamily. Homotetramer. Mg(2+) is required as a cofactor.

It is found in the cytoplasm. The catalysed reaction is beta-D-fructose 6-phosphate + ATP = beta-D-fructose 1,6-bisphosphate + ADP + H(+). It participates in carbohydrate degradation; glycolysis; D-glyceraldehyde 3-phosphate and glycerone phosphate from D-glucose: step 3/4. With respect to regulation, allosterically activated by ADP and other diphosphonucleosides, and allosterically inhibited by phosphoenolpyruvate. Functionally, catalyzes the phosphorylation of D-fructose 6-phosphate to fructose 1,6-bisphosphate by ATP, the first committing step of glycolysis. The sequence is that of ATP-dependent 6-phosphofructokinase from Sulfurihydrogenibium sp. (strain YO3AOP1).